The following is a 248-amino-acid chain: uncharacterized protein (248 aa).

Residues 30 to 50 form a helical membrane-spanning segment; the sequence is LIALAIFIGLIAIFMFGCKAA. Disordered regions lie at residues 59–91 and 208–248; these read NRDTTQSDTDVIYPRDDPRASRSHQNFGFMDPP and TTES…VSTR. Composition is skewed to polar residues over residues 210 to 220 and 239 to 248; these read ESPAPAQSTSN and SLHNETVSTR.

It localises to the membrane. This is an uncharacterized protein from Caenorhabditis elegans.